The following is a 501-amino-acid chain: Pentatricopeptide repeat-containing protein At2g36730 (501 aa).

PPR repeat units follow at residues 77-111 (TPST…GIKP), 112-146 (NKLT…GFDF), 147-177 (DVYV…MTER), 178-212 (NVVS…RFCP), 213-243 (DETT…VREL), 246-276 (NCRL…MVDK), 277-312 (NVWT…SVRP), 313-343 (NYVT…MEKI), and 349-379 (MMIH…MPFE). The segment at 384–462 (VWRTLLSACS…IAGESCLELG (79 aa)) is type E motif. The tract at residues 463–493 (GSFHRFFSGYDPRSEYVSIYELLDLFKFQLT) is type E(+) motif.

It belongs to the PPR family. PCMP-E subfamily.

In Arabidopsis thaliana (Mouse-ear cress), this protein is Pentatricopeptide repeat-containing protein At2g36730 (PCMP-E44).